The chain runs to 144 residues: Large-conductance mechanosensitive channel (144 aa).

Helical transmembrane passes span 14–34 (VLDMAVGIIIGAAFGKIVTSF) and 81–101 (GTFLNVVLDFVIVAFSIFLII).

Belongs to the MscL family. Homopentamer.

The protein localises to the cell inner membrane. Channel that opens in response to stretch forces in the membrane lipid bilayer. May participate in the regulation of osmotic pressure changes within the cell. In Bdellovibrio bacteriovorus (strain ATCC 15356 / DSM 50701 / NCIMB 9529 / HD100), this protein is Large-conductance mechanosensitive channel.